The primary structure comprises 100 residues: NADH-quinone oxidoreductase subunit K 2 (100 aa).

3 consecutive transmembrane segments (helical) span residues 2–22 (LAIE…TIGV), 29–49 (IVIF…FIAF), and 61–81 (FVFF…ALMI).

It belongs to the complex I subunit 4L family. In terms of assembly, NDH-1 is composed of 14 different subunits. Subunits NuoA, H, J, K, L, M, N constitute the membrane sector of the complex.

Its subcellular location is the cell inner membrane. The catalysed reaction is a quinone + NADH + 5 H(+)(in) = a quinol + NAD(+) + 4 H(+)(out). Functionally, NDH-1 shuttles electrons from NADH, via FMN and iron-sulfur (Fe-S) centers, to quinones in the respiratory chain. The immediate electron acceptor for the enzyme in this species is believed to be ubiquinone. Couples the redox reaction to proton translocation (for every two electrons transferred, four hydrogen ions are translocated across the cytoplasmic membrane), and thus conserves the redox energy in a proton gradient. The polypeptide is NADH-quinone oxidoreductase subunit K 2 (Citrifermentans bemidjiense (strain ATCC BAA-1014 / DSM 16622 / JCM 12645 / Bem) (Geobacter bemidjiensis)).